The chain runs to 173 residues: Probable calcium-binding protein CML14 (173 aa).

EF-hand domains are found at residues 21-56 (SQLKQLRELFRRFDMNGDGSLTQLELAALLRSLGLR), 57-92 (PTGDEVHALLAGMDANGNGSVEFDELAAAIAPVLTT), 97-132 (VDQAQLLEVFRAFDRDGNGFISAAELARSMARLGQP), and 133-168 (LTFEELTRMMRDADTDGDGVISFKEFAAVMAKSALD). Ca(2+)-binding residues include Asp34, Asn36, Asp38, Ser40, Glu45, Asp70, Asn72, Asn74, Ser76, Glu81, Asp110, Asp112, Asn114, Glu121, Asp146, Asp148, Asp150, and Glu157.

In terms of biological role, potential calcium sensor. This chain is Probable calcium-binding protein CML14 (CML14), found in Oryza sativa subsp. japonica (Rice).